Consider the following 692-residue polypeptide: Methionine--tRNA ligase (692 aa).

The 'HIGH' region signature appears at 12-22 (PYANGSFHIGH). Residues cysteine 143, cysteine 146, cysteine 156, and cysteine 159 each contribute to the Zn(2+) site. A 'KMSKS' region motif is present at residues 341 to 345 (KMSKS). Lysine 344 provides a ligand contact to ATP. The region spanning 586–692 (DFAKIDLRIA…PGAQPGMRVR (107 aa)) is the tRNA-binding domain.

Belongs to the class-I aminoacyl-tRNA synthetase family. MetG type 1 subfamily. In terms of assembly, homodimer. Zn(2+) serves as cofactor.

It is found in the cytoplasm. The catalysed reaction is tRNA(Met) + L-methionine + ATP = L-methionyl-tRNA(Met) + AMP + diphosphate. Its function is as follows. Is required not only for elongation of protein synthesis but also for the initiation of all mRNA translation through initiator tRNA(fMet) aminoacylation. The protein is Methionine--tRNA ligase of Bordetella pertussis (strain Tohama I / ATCC BAA-589 / NCTC 13251).